Reading from the N-terminus, the 532-residue chain is Nectin-4 (532 aa).

Residues 1–30 form the signal peptide; the sequence is MGPLHGALLPPISVTVSLLILLLCAPGGRC. The Ig-like V-type domain occupies 31–142; sequence GVVHTEKSMT…GNFDAELELK (112 aa). The Extracellular portion of the chain corresponds to 31 to 344; that stretch reads GVVHTEKSMT…TKIDLVSVSL (314 aa). 3 disulfide bridges follow: Cys-51-Cys-125, Cys-169-Cys-221, and Cys-266-Cys-312. 2 Ig-like C2-type domains span residues 146-235 and 244-328; these read PPLP…KRIT and AEVS…AIVS. Positions 152 to 179 are disordered; it reads GPGPPLTEGEGKSLAASCTAEGNPAPTL. N-linked (GlcNAc...) asparagine glycosylation is found at Asn-189 and Asn-282. The chain crosses the membrane as a helical span at residues 345–365; it reads GSVGILTAVLLVVLVITLLLV. At 366-532 the chain is on the cytoplasmic side; the sequence is NRHHKRQTKQ…IYINGRGHLV (167 aa). A disordered region spans residues 453 to 491; the sequence is QTELLSTVPDEEVKEDGEEPEQVEQSLEKEPNPTEPDGM. A compositionally biased stretch (acidic residues) spans 461 to 474; the sequence is PDEEVKEDGEEPEQ.

Belongs to the nectin family.

It localises to the cell membrane. May be involved in cell adhesion. The protein is Nectin-4 of Xenopus tropicalis (Western clawed frog).